The sequence spans 626 residues: Chaperone protein HtpG (626 aa).

Positions M1–R341 are a; substrate-binding. The segment at E342 to K552 is b. The tract at residues I553–A626 is c.

The protein belongs to the heat shock protein 90 family. Homodimer.

Its subcellular location is the cytoplasm. In terms of biological role, molecular chaperone. Has ATPase activity. The protein is Chaperone protein HtpG of Bacillus licheniformis (strain ATCC 14580 / DSM 13 / JCM 2505 / CCUG 7422 / NBRC 12200 / NCIMB 9375 / NCTC 10341 / NRRL NRS-1264 / Gibson 46).